A 444-amino-acid chain; its full sequence is 3-phosphoshikimate 1-carboxyvinyltransferase (444 aa).

3-phosphoshikimate is bound by residues K24, S25, and R29. K24 contacts phosphoenolpyruvate. The phosphoenolpyruvate site is built by G97 and R125. S170, Q172, D318, and K345 together coordinate 3-phosphoshikimate. Residue Q172 coordinates phosphoenolpyruvate. D318 serves as the catalytic Proton acceptor. Residues R349 and R391 each coordinate phosphoenolpyruvate.

This sequence belongs to the EPSP synthase family. In terms of assembly, monomer.

The protein localises to the cytoplasm. It carries out the reaction 3-phosphoshikimate + phosphoenolpyruvate = 5-O-(1-carboxyvinyl)-3-phosphoshikimate + phosphate. Its pathway is metabolic intermediate biosynthesis; chorismate biosynthesis; chorismate from D-erythrose 4-phosphate and phosphoenolpyruvate: step 6/7. Functionally, catalyzes the transfer of the enolpyruvyl moiety of phosphoenolpyruvate (PEP) to the 5-hydroxyl of shikimate-3-phosphate (S3P) to produce enolpyruvyl shikimate-3-phosphate and inorganic phosphate. The sequence is that of 3-phosphoshikimate 1-carboxyvinyltransferase from Halorhodospira halophila (strain DSM 244 / SL1) (Ectothiorhodospira halophila (strain DSM 244 / SL1)).